The chain runs to 904 residues: Alanine--tRNA ligase (904 aa).

Zn(2+) contacts are provided by His-603, His-607, Cys-707, and His-711.

This sequence belongs to the class-II aminoacyl-tRNA synthetase family. Requires Zn(2+) as cofactor.

The protein localises to the cytoplasm. It carries out the reaction tRNA(Ala) + L-alanine + ATP = L-alanyl-tRNA(Ala) + AMP + diphosphate. Catalyzes the attachment of alanine to tRNA(Ala) in a two-step reaction: alanine is first activated by ATP to form Ala-AMP and then transferred to the acceptor end of tRNA(Ala). Also edits incorrectly charged Ser-tRNA(Ala) and Gly-tRNA(Ala) via its editing domain. This is Alanine--tRNA ligase from Sulfurisphaera tokodaii (strain DSM 16993 / JCM 10545 / NBRC 100140 / 7) (Sulfolobus tokodaii).